A 460-amino-acid polypeptide reads, in one-letter code: Cysteine--tRNA ligase (460 aa).

Residue Cys28 participates in Zn(2+) binding. The 'HIGH' region signature appears at 30-40 (MTVYDYCHLGH). Zn(2+) is bound by residues Cys209, His234, and Glu238. Positions 266–270 (KMSKS) match the 'KMSKS' region motif. ATP is bound at residue Lys269.

It belongs to the class-I aminoacyl-tRNA synthetase family. Monomer. Zn(2+) is required as a cofactor.

It is found in the cytoplasm. It carries out the reaction tRNA(Cys) + L-cysteine + ATP = L-cysteinyl-tRNA(Cys) + AMP + diphosphate. The protein is Cysteine--tRNA ligase of Pseudomonas fluorescens (strain ATCC BAA-477 / NRRL B-23932 / Pf-5).